We begin with the raw amino-acid sequence, 658 residues long: Integrator complex subunit 9 (658 aa).

The segment at 550–574 is disordered; that stretch reads KHVLQLPPKPPQPPTSKKRKRVSDD. Residues 566–570 carry the Nuclear localization signal motif; sequence KKRKR.

It belongs to the metallo-beta-lactamase superfamily. RNA-metabolizing metallo-beta-lactamase-like family. INTS9 subfamily. In terms of assembly, component of the Integrator complex, composed of core subunits INTS1, INTS2, INTS3, INTS4, INTS5, INTS6, INTS7, INTS8, INTS9/RC74, INTS10, INTS11/CPSF3L, INTS12, INTS13, INTS14 and INTS15. The core complex associates with protein phosphatase 2A subunits PPP2CA and PPP2R1A, to form the Integrator-PP2A (INTAC) complex. INTS9 is part of the RNA endonuclease subcomplex, composed of INTS4, INTS9, INTS11 and inositol hexakisphosphate (InsP6).

It is found in the nucleus. The protein localises to the cytoplasm. Its function is as follows. Component of the integrator complex, a multiprotein complex that terminates RNA polymerase II (Pol II) transcription in the promoter-proximal region of genes. The integrator complex provides a quality checkpoint during transcription elongation by driving premature transcription termination of transcripts that are unfavorably configured for transcriptional elongation: the complex terminates transcription by (1) catalyzing dephosphorylation of the C-terminal domain (CTD) of Pol II subunit POLR2A/RPB1 and SUPT5H/SPT5, (2) degrading the exiting nascent RNA transcript via endonuclease activity and (3) promoting the release of Pol II from bound DNA. The integrator complex is also involved in terminating the synthesis of non-coding Pol II transcripts, such as enhancer RNAs (eRNAs), small nuclear RNAs (snRNAs), telomerase RNAs and long non-coding RNAs (lncRNAs). The sequence is that of Integrator complex subunit 9 (INTS9) from Gallus gallus (Chicken).